A 666-amino-acid polypeptide reads, in one-letter code: Chaperone protein dnaK1 (666 aa).

The residue at position 198 (threonine 198) is a Phosphothreonine; by autocatalysis.

It belongs to the heat shock protein 70 family.

Its function is as follows. Acts as a chaperone. The protein is Chaperone protein dnaK1 (dnaK1) of Prochlorococcus marinus (strain SARG / CCMP1375 / SS120).